Here is a 193-residue protein sequence, read N- to C-terminus: ATP-dependent Clp protease proteolytic subunit 1 (193 aa).

Residue S98 is the Nucleophile of the active site. H123 is an active-site residue.

This sequence belongs to the peptidase S14 family. In terms of assembly, fourteen ClpP subunits assemble into 2 heptameric rings which stack back to back to give a disk-like structure with a central cavity, resembling the structure of eukaryotic proteasomes.

It is found in the cytoplasm. It carries out the reaction Hydrolysis of proteins to small peptides in the presence of ATP and magnesium. alpha-casein is the usual test substrate. In the absence of ATP, only oligopeptides shorter than five residues are hydrolyzed (such as succinyl-Leu-Tyr-|-NHMec, and Leu-Tyr-Leu-|-Tyr-Trp, in which cleavage of the -Tyr-|-Leu- and -Tyr-|-Trp bonds also occurs).. In terms of biological role, cleaves peptides in various proteins in a process that requires ATP hydrolysis. Has a chymotrypsin-like activity. Plays a major role in the degradation of misfolded proteins. The sequence is that of ATP-dependent Clp protease proteolytic subunit 1 from Bacillus cereus (strain ATCC 10987 / NRS 248).